A 68-amino-acid polypeptide reads, in one-letter code: DNA-directed RNA polymerase subunit omega (68 aa).

This sequence belongs to the RNA polymerase subunit omega family. In terms of assembly, the RNAP catalytic core consists of 2 alpha, 1 beta, 1 beta' and 1 omega subunit. When a sigma factor is associated with the core the holoenzyme is formed, which can initiate transcription.

The catalysed reaction is RNA(n) + a ribonucleoside 5'-triphosphate = RNA(n+1) + diphosphate. Promotes RNA polymerase assembly. Latches the N- and C-terminal regions of the beta' subunit thereby facilitating its interaction with the beta and alpha subunits. This Persephonella marina (strain DSM 14350 / EX-H1) protein is DNA-directed RNA polymerase subunit omega.